We begin with the raw amino-acid sequence, 545 residues long: GMP synthase [glutamine-hydrolyzing] (545 aa).

In terms of domain architecture, Glutamine amidotransferase type-1 spans 17 to 211 (TVLVLDMGSQ…ATKICGARPD (195 aa)). Cysteine 93 acts as the Nucleophile in catalysis. Catalysis depends on residues histidine 185 and glutamate 187. The GMPS ATP-PPase domain occupies 212–420 (WKMDDFSARE…LGIHEELIGR (209 aa)). Residue 240–246 (SGGVDST) participates in ATP binding. Arginine 313, aspartate 482, lysine 537, and glutamate 543 together coordinate XMP.

As to quaternary structure, homodimer. The cofactor is Mg(2+).

Its subcellular location is the cytoplasm. It is found in the cytosol. The enzyme catalyses XMP + L-glutamine + ATP + H2O = GMP + L-glutamate + AMP + diphosphate + 2 H(+). It participates in purine metabolism; GMP biosynthesis; GMP from XMP (L-Gln route): step 1/1. In terms of biological role, catalyzes the conversion of xanthine monophosphate (XMP) to GMP in the presence of glutamine and ATP through an adenyl-XMP intermediate. This Gibberella zeae (strain ATCC MYA-4620 / CBS 123657 / FGSC 9075 / NRRL 31084 / PH-1) (Wheat head blight fungus) protein is GMP synthase [glutamine-hydrolyzing] (GUA1).